Here is a 466-residue protein sequence, read N- to C-terminus: Acetyl-coenzyme A carboxylase carboxyl transferase subunit beta, chloroplastic (466 aa).

In terms of domain architecture, CoA carboxyltransferase N-terminal spans 198-466 (LWIQCENCYE…FPLNQNSIGQ (269 aa)). Residues cysteine 202, cysteine 205, cysteine 221, and cysteine 224 each contribute to the Zn(2+) site. Residues 202 to 224 (CENCYELNYKKLLKSKMRICDEC) form a C4-type zinc finger.

This sequence belongs to the AccD/PCCB family. In terms of assembly, acetyl-CoA carboxylase is a heterohexamer composed of biotin carboxyl carrier protein, biotin carboxylase and 2 subunits each of ACCase subunit alpha and ACCase plastid-coded subunit beta (accD). It depends on Zn(2+) as a cofactor.

The protein resides in the plastid. The protein localises to the chloroplast stroma. It carries out the reaction N(6)-carboxybiotinyl-L-lysyl-[protein] + acetyl-CoA = N(6)-biotinyl-L-lysyl-[protein] + malonyl-CoA. It functions in the pathway lipid metabolism; malonyl-CoA biosynthesis; malonyl-CoA from acetyl-CoA: step 1/1. Its function is as follows. Component of the acetyl coenzyme A carboxylase (ACC) complex. Biotin carboxylase (BC) catalyzes the carboxylation of biotin on its carrier protein (BCCP) and then the CO(2) group is transferred by the transcarboxylase to acetyl-CoA to form malonyl-CoA. The sequence is that of Acetyl-coenzyme A carboxylase carboxyl transferase subunit beta, chloroplastic from Fagopyrum esculentum subsp. ancestrale (Wild buckwheat).